Here is a 119-residue protein sequence, read N- to C-terminus: Large ribosomal subunit protein bL20 (119 aa).

It belongs to the bacterial ribosomal protein bL20 family.

Its function is as follows. Binds directly to 23S ribosomal RNA and is necessary for the in vitro assembly process of the 50S ribosomal subunit. It is not involved in the protein synthesizing functions of that subunit. The chain is Large ribosomal subunit protein bL20 from Halalkalibacterium halodurans (strain ATCC BAA-125 / DSM 18197 / FERM 7344 / JCM 9153 / C-125) (Bacillus halodurans).